A 642-amino-acid chain; its full sequence is Threonine--tRNA ligase (642 aa).

A catalytic region spans residues 239–530; sequence DHRKLGKELN…LTEHYAGAFP (292 aa). Zn(2+) is bound by residues Cys331, His382, and His507.

The protein belongs to the class-II aminoacyl-tRNA synthetase family. As to quaternary structure, homodimer. Zn(2+) serves as cofactor.

The protein localises to the cytoplasm. It carries out the reaction tRNA(Thr) + L-threonine + ATP = L-threonyl-tRNA(Thr) + AMP + diphosphate + H(+). Its function is as follows. Catalyzes the attachment of threonine to tRNA(Thr) in a two-step reaction: L-threonine is first activated by ATP to form Thr-AMP and then transferred to the acceptor end of tRNA(Thr). Also edits incorrectly charged L-seryl-tRNA(Thr). This chain is Threonine--tRNA ligase, found in Lawsonia intracellularis (strain PHE/MN1-00).